The sequence spans 504 residues: ATP synthase subunit alpha (504 aa).

170–177 (GDRQTGKT) is a binding site for ATP.

It belongs to the ATPase alpha/beta chains family. In terms of assembly, F-type ATPases have 2 components, CF(1) - the catalytic core - and CF(0) - the membrane proton channel. CF(1) has five subunits: alpha(3), beta(3), gamma(1), delta(1), epsilon(1). CF(0) has three main subunits: a(1), b(2) and c(9-12). The alpha and beta chains form an alternating ring which encloses part of the gamma chain. CF(1) is attached to CF(0) by a central stalk formed by the gamma and epsilon chains, while a peripheral stalk is formed by the delta and b chains.

The protein localises to the cell membrane. The enzyme catalyses ATP + H2O + 4 H(+)(in) = ADP + phosphate + 5 H(+)(out). Produces ATP from ADP in the presence of a proton gradient across the membrane. The alpha chain is a regulatory subunit. The protein is ATP synthase subunit alpha of Shouchella clausii (strain KSM-K16) (Alkalihalobacillus clausii).